Here is a 309-residue protein sequence, read N- to C-terminus: uncharacterized protein (309 aa).

6 helical membrane passes run 28 to 48 (IIALSSLLTLLINHPSLIMKP), 73 to 93 (MMLNLFRWVCIAILVLVVIGW), 113 to 133 (LIVIDGGEQAAAVMTFLLLPI), 157 to 177 (ITAFISYFVIRIQVAVLYFHS), 220 to 240 (FVVIPTWGTLLVQIVIFAALF), and 259 to 279 (IFAVMLGLISFSIIMAGILIL).

The protein resides in the cell membrane. This is an uncharacterized protein from Bacillus subtilis (strain 168).